The sequence spans 398 residues: Candidapepsin-3 (398 aa).

The signal sequence occupies residues 1 to 18; that stretch reads MFLKNIFIALAIALLADA. Positions 19–58 are cleaved as a propeptide — activation peptide; sequence TPTTSNNSPGFVALNFDVIKTHKNVTGPQGEINTNVNVKR. An N-linked (GlcNAc...) asparagine glycan is attached at asparagine 42. One can recognise a Peptidase A1 domain in the interval 72–384; it reads YASDITVGSN…DLDDNEISLA (313 aa). The active site involves aspartate 90. Pepstatin A is bound at residue 90-92; sequence DTG. The span at 103–112 shows a compositional bias: polar residues; the sequence is VSCQAGQGQD. The tract at residues 103 to 139 is disordered; that stretch reads VSCQAGQGQDPNFCKNEGTYSPSSSSSSQNLNSPFSI. A disulfide bridge connects residues cysteine 105 and cysteine 116. Over residues 123–138 the composition is skewed to low complexity; it reads SPSSSSSSQNLNSPFS. Pepstatin A-binding positions include 140 to 143 and 274 to 278; these read EYGD and DSGTT. Residue aspartate 274 is part of the active site. Cysteine 312 and cysteine 350 are oxidised to a cystine. N-linked (GlcNAc...) asparagine glycosylation is present at asparagine 313.

The protein belongs to the peptidase A1 family. In terms of processing, O-glycosylated.

It is found in the secreted. The enzyme catalyses Preferential cleavage at the carboxyl of hydrophobic amino acids, but fails to cleave 15-Leu-|-Tyr-16, 16-Tyr-|-Leu-17 and 24-Phe-|-Phe-25 of insulin B chain. Activates trypsinogen, and degrades keratin.. The chain is Candidapepsin-3 (SAP3) from Candida albicans (strain WO-1) (Yeast).